The following is a 333-amino-acid chain: Foldase protein PrsA (333 aa).

Residues 1 to 22 (MKKSTKLLAGIVTLASAMTLAA) form the signal peptide. Cysteine 23 is lipidated: N-palmitoyl cysteine. Cysteine 23 is lipidated: S-diacylglycerol cysteine. The PpiC domain maps to 145–240 (TPEMTTQVIT…NKFYIVKVTK (96 aa)). The disordered stretch occupies residues 301–333 (DKKASKANTSKSDQKTSSDSSKDSQSSKSKSEK). Over residues 312 to 322 (SDQKTSSDSSK) the composition is skewed to basic and acidic residues. Positions 323–333 (DSQSSKSKSEK) are enriched in low complexity.

Belongs to the PrsA family.

It localises to the cell membrane. The enzyme catalyses [protein]-peptidylproline (omega=180) = [protein]-peptidylproline (omega=0). Its function is as follows. Plays a major role in protein secretion by helping the post-translocational extracellular folding of several secreted proteins. This chain is Foldase protein PrsA, found in Streptococcus equi subsp. zooepidemicus (strain H70).